The following is a 276-amino-acid chain: Apulose-4-phosphate transketolase subunit A (276 aa).

This sequence belongs to the transketolase family. Probable heterodimer composed of AptA and AptB. Thiamine diphosphate is required as a cofactor.

It catalyses the reaction apulose 4-phosphate + D-glyceraldehyde 3-phosphate = D-xylulose 5-phosphate + dihydroxyacetone phosphate. It functions in the pathway carbohydrate metabolism. Functionally, involved in catabolism of D-apiose. Catalyzes the transfer of the glycolaldehyde group from apulose-4-phosphate to D-glyceraldehyde 3-phosphate, generating dihydroxyacetone phosphate and D-xylulose-5-phosphate. The sequence is that of Apulose-4-phosphate transketolase subunit A from Actinobacillus succinogenes (strain ATCC 55618 / DSM 22257 / CCUG 43843 / 130Z).